The following is a 214-amino-acid chain: MKIILLGAPGAGKGTQAQFIMNKFGIPQISTGDMLRGAIKAGTDLGKQAKTLMDAGQLVPDDLIISLVKERVAQADCAKGFLLDGFPRTIPQADALKTVGIQIDYVLEFDVPDEVIVERMSGRRVHQASGRTYHVVYNPPKVEGKDDVTGEDLIIRADDKPETVLDRLKVYHSTTKPLVDYYQAEAKAGNTKYFRLDGTKKVEEVSQELDTILA.

An ATP-binding site is contributed by 10–15 (GAGKGT). The interval 30-59 (STGDMLRGAIKAGTDLGKQAKTLMDAGQLV) is NMP. AMP contacts are provided by residues threonine 31, arginine 36, 57–59 (QLV), 85–88 (GFPR), and glutamine 92. The tract at residues 122 to 159 (GRRVHQASGRTYHVVYNPPKVEGKDDVTGEDLIIRADD) is LID. Residues arginine 123 and 132-133 (TY) each bind ATP. Residues arginine 156 and arginine 167 each coordinate AMP. An ATP-binding site is contributed by lysine 200.

Belongs to the adenylate kinase family. Monomer.

It is found in the cytoplasm. It catalyses the reaction AMP + ATP = 2 ADP. It participates in purine metabolism; AMP biosynthesis via salvage pathway; AMP from ADP: step 1/1. In terms of biological role, catalyzes the reversible transfer of the terminal phosphate group between ATP and AMP. Plays an important role in cellular energy homeostasis and in adenine nucleotide metabolism. In Pasteurella multocida (strain Pm70), this protein is Adenylate kinase.